The following is a 307-amino-acid chain: MQDIHDFSMNGVGGGGGGGGRFFGGGIGGGGGGDRRMRAHQNNILNHHQSLKCPRCNSLNTKFCYYNNYNLSQPRHFCKNCRRYWTKGGVLRNVPVGGGCRKAKRSKTKQVPSSSSADKPTTTQDDHHVEEKSSTGSHSSSESSSLTASNSTTVAAVSVTAAAEVASSVIPGFDMPNMKIYGNGIEWSTLLGQGSSAGGVFSEIGGFPAVSAIETTPFGFGGKFVNQDDHLKLEGETVQQQQFGDRTAQVEFQGRSSDPNMGFEPLDWGSGGGDQTLFDLTSTVDHAYWSQSQWTSSDQDQSGLYLP.

The Dof-type zinc-finger motif lies at 51–105 (LKCPRCNSLNTKFCYYNNYNLSQPRHFCKNCRRYWTKGGVLRNVPVGGGCRKAKR). Residues Cys-53, Cys-56, Cys-78, and Cys-81 each contribute to the Zn(2+) site. The disordered stretch occupies residues 96-147 (VGGGCRKAKRSKTKQVPSSSSADKPTTTQDDHHVEEKSSTGSHSSSESSSLT). A compositionally biased stretch (polar residues) spans 109–123 (KQVPSSSSADKPTTT). Over residues 124-133 (QDDHHVEEKS) the composition is skewed to basic and acidic residues. Residues 134–147 (STGSHSSSESSSLT) show a composition bias toward low complexity.

It localises to the nucleus. Transcription factor that binds specifically to a 5'-AA[AG]G-3' consensus core sequence. Enhances the DNA binding of OBF transcription factors to OCS elements. This chain is Dof zinc finger protein DOF5.4 (DOF5.4), found in Arabidopsis thaliana (Mouse-ear cress).